Consider the following 564-residue polypeptide: Eukaryotic translation initiation factor 3 subunit L (564 aa).

N-acetylserine is present on serine 2. Serine 21 is modified (phosphoserine). Residues 331–537 (DAIRVFANIL…IHIADTKVAR (207 aa)) form the PCI domain. Residues lysine 465 and lysine 549 each carry the N6-acetyllysine modification.

Belongs to the eIF-3 subunit L family. In terms of assembly, component of the eukaryotic translation initiation factor 3 (eIF-3) complex, which is composed of 13 subunits: EIF3A, EIF3B, EIF3C, EIF3D, EIF3E, EIF3F, EIF3G, EIF3H, EIF3I, EIF3J, EIF3K, EIF3L and EIF3M. The eIF-3 complex appears to include 3 stable modules: module A is composed of EIF3A, EIF3B, EIF3G and EIF3I; module B is composed of EIF3F, EIF3H, and EIF3M; and module C is composed of EIF3C, EIF3D, EIF3E, EIF3K and EIF3L. EIF3C of module C binds EIF3B of module A and EIF3H of module B, thereby linking the three modules. EIF3J is a labile subunit that binds to the eIF-3 complex via EIF3B. The eIF-3 complex interacts with RPS6KB1 under conditions of nutrient depletion. Mitogenic stimulation leads to binding and activation of a complex composed of MTOR and RPTOR, leading to phosphorylation and release of RPS6KB1 and binding of EIF4B to eIF-3. Interacts with RRN3.

It localises to the cytoplasm. Functionally, component of the eukaryotic translation initiation factor 3 (eIF-3) complex, which is required for several steps in the initiation of protein synthesis. The eIF-3 complex associates with the 40S ribosome and facilitates the recruitment of eIF-1, eIF-1A, eIF-2:GTP:methionyl-tRNAi and eIF-5 to form the 43S pre-initiation complex (43S PIC). The eIF-3 complex stimulates mRNA recruitment to the 43S PIC and scanning of the mRNA for AUG recognition. The eIF-3 complex is also required for disassembly and recycling of post-termination ribosomal complexes and subsequently prevents premature joining of the 40S and 60S ribosomal subunits prior to initiation. The eIF-3 complex specifically targets and initiates translation of a subset of mRNAs involved in cell proliferation, including cell cycling, differentiation and apoptosis, and uses different modes of RNA stem-loop binding to exert either translational activation or repression. This Pan troglodytes (Chimpanzee) protein is Eukaryotic translation initiation factor 3 subunit L.